We begin with the raw amino-acid sequence, 230 residues long: Peptidyl-prolyl cis-trans isomerase FKBP16-4, chloroplastic (230 aa).

A chloroplast-targeting transit peptide spans 1 to 56; it reads MILTMKLVHPLHHSLSSSIPFPSRKRQSKPYRCSLPSPGCEKVIRTETVLPPAPVS. A PPIase FKBP-type domain is found at 123-217; the sequence is GSRVAVHYVA…ELDIELLSIK (95 aa).

This sequence belongs to the FKBP-type PPIase family.

The protein resides in the plastid. The protein localises to the chloroplast thylakoid lumen. It catalyses the reaction [protein]-peptidylproline (omega=180) = [protein]-peptidylproline (omega=0). Functionally, PPIases accelerate the folding of proteins. It catalyzes the cis-trans isomerization of proline imidic peptide bonds in oligopeptides. This chain is Peptidyl-prolyl cis-trans isomerase FKBP16-4, chloroplastic (FKBP16-4), found in Arabidopsis thaliana (Mouse-ear cress).